The chain runs to 157 residues: Ribosome maturation factor RimP (157 aa).

This sequence belongs to the RimP family.

Its subcellular location is the cytoplasm. Functionally, required for maturation of 30S ribosomal subunits. This chain is Ribosome maturation factor RimP, found in Synechococcus sp. (strain CC9311).